The following is a 361-amino-acid chain: Phosphoserine aminotransferase (361 aa).

Arg43 lines the L-glutamate pocket. Pyridoxal 5'-phosphate-binding positions include 77 to 78 (AS), Trp103, Thr153, Asp173, and Gln196. Residue Lys197 is modified to N6-(pyridoxal phosphate)lysine. 238–239 (NT) contributes to the pyridoxal 5'-phosphate binding site.

It belongs to the class-V pyridoxal-phosphate-dependent aminotransferase family. SerC subfamily. Homodimer. It depends on pyridoxal 5'-phosphate as a cofactor.

The protein localises to the cytoplasm. The enzyme catalyses O-phospho-L-serine + 2-oxoglutarate = 3-phosphooxypyruvate + L-glutamate. It carries out the reaction 4-(phosphooxy)-L-threonine + 2-oxoglutarate = (R)-3-hydroxy-2-oxo-4-phosphooxybutanoate + L-glutamate. It participates in amino-acid biosynthesis; L-serine biosynthesis; L-serine from 3-phospho-D-glycerate: step 2/3. Its pathway is cofactor biosynthesis; pyridoxine 5'-phosphate biosynthesis; pyridoxine 5'-phosphate from D-erythrose 4-phosphate: step 3/5. Catalyzes the reversible conversion of 3-phosphohydroxypyruvate to phosphoserine and of 3-hydroxy-2-oxo-4-phosphonooxybutanoate to phosphohydroxythreonine. In Pseudomonas paraeruginosa (strain DSM 24068 / PA7) (Pseudomonas aeruginosa (strain PA7)), this protein is Phosphoserine aminotransferase.